We begin with the raw amino-acid sequence, 194 residues long: Lipoprotein signal peptidase (194 aa).

A run of 2 helical transmembrane segments spans residues 75 to 95 (TIFL…MICS) and 97 to 117 (TIGS…NLID). Active-site residues include Asp126 and Asp144. The helical transmembrane segment at 135 to 155 (YSFPVFNLADCFITLGVIILM) threads the bilayer.

It belongs to the peptidase A8 family.

It is found in the cell inner membrane. It catalyses the reaction Release of signal peptides from bacterial membrane prolipoproteins. Hydrolyzes -Xaa-Yaa-Zaa-|-(S,diacylglyceryl)Cys-, in which Xaa is hydrophobic (preferably Leu), and Yaa (Ala or Ser) and Zaa (Gly or Ala) have small, neutral side chains.. The protein operates within protein modification; lipoprotein biosynthesis (signal peptide cleavage). In terms of biological role, this protein specifically catalyzes the removal of signal peptides from prolipoproteins. This Rickettsia prowazekii (strain Madrid E) protein is Lipoprotein signal peptidase.